Reading from the N-terminus, the 277-residue chain is MTLPEHSPLGKPSAYKTEYDASLLFPIPRQPKRAEIGLPEGRALPFFGVDIWNAYEVSWLNLKGKPQVALATFIIPADTPNIVESKSFKLYLNSFNQTKIASPEALQQLLHHDLSEATGGTVQVRLVTEADLGTQKMGELDGLLLDRLDIETDIYEPDPTLLSAEQEESPVEETLVSHLLKSNCLVTGQPDWGSVQIRYVGAPIDQEGLLKYLISFRNHNEFHEQCVERIFTDVMRMCKPVKLAVYARYTRRGGLDINPFRTNYNTPWPDNRRNARQ.

83–85 (VES) provides a ligand contact to substrate. Residue 85 to 86 (SK) participates in NADPH binding. The active-site Thioimide intermediate is cysteine 184. Aspartate 191 (proton donor) is an active-site residue. 223 to 224 (HE) is a binding site for substrate. Residue 252–253 (RG) participates in NADPH binding.

It belongs to the GTP cyclohydrolase I family. QueF type 2 subfamily. As to quaternary structure, homodimer.

It localises to the cytoplasm. The enzyme catalyses 7-aminomethyl-7-carbaguanine + 2 NADP(+) = 7-cyano-7-deazaguanine + 2 NADPH + 3 H(+). Its pathway is tRNA modification; tRNA-queuosine biosynthesis. In terms of biological role, catalyzes the NADPH-dependent reduction of 7-cyano-7-deazaguanine (preQ0) to 7-aminomethyl-7-deazaguanine (preQ1). This is NADPH-dependent 7-cyano-7-deazaguanine reductase from Cupriavidus metallidurans (strain ATCC 43123 / DSM 2839 / NBRC 102507 / CH34) (Ralstonia metallidurans).